Reading from the N-terminus, the 217-residue chain is Small ribosomal subunit protein uS3 (217 aa).

Residues 38–106 (IRKFIQKELA…QVHINIIEIK (69 aa)) enclose the KH type-2 domain.

Belongs to the universal ribosomal protein uS3 family. In terms of assembly, part of the 30S ribosomal subunit. Forms a tight complex with proteins S10 and S14.

Its function is as follows. Binds the lower part of the 30S subunit head. Binds mRNA in the 70S ribosome, positioning it for translation. This chain is Small ribosomal subunit protein uS3, found in Streptococcus uberis (strain ATCC BAA-854 / 0140J).